The sequence spans 238 residues: Uroporphyrinogen-III C-methyltransferase (238 aa).

S-adenosyl-L-homocysteine-binding positions include Pro-11, Gly-87–Asp-89, Thr-117–Ser-118, and Met-170.

The protein belongs to the precorrin methyltransferase family. As to quaternary structure, monomer.

The catalysed reaction is uroporphyrinogen III + 2 S-adenosyl-L-methionine = precorrin-2 + 2 S-adenosyl-L-homocysteine + H(+). It functions in the pathway cofactor biosynthesis; adenosylcobalamin biosynthesis; precorrin-2 from uroporphyrinogen III: step 1/1. The protein operates within porphyrin-containing compound metabolism; siroheme biosynthesis; precorrin-2 from uroporphyrinogen III: step 1/1. Its activity is regulated as follows. SUMT exhibits a substrate inhibition phenomenon at uroporphyrinogen III concentrations above 0.5 uM; this property might play a regulatory role in cobalamin biosynthesis. Catalyzes the two successive C-2 and C-7 methylation reactions involved in the conversion of uroporphyrinogen III to precorrin-2 via the intermediate formation of precorrin-1. It is a step in the biosynthesis of both cobalamin (vitamin B12) and siroheme. This Priestia megaterium (Bacillus megaterium) protein is Uroporphyrinogen-III C-methyltransferase.